The following is a 90-amino-acid chain: Acylphosphatase (90 aa).

The Acylphosphatase-like domain occupies 3-90 (QYRIIVDGRV…DGFQKFNISY (88 aa)). Active-site residues include arginine 18 and asparagine 36.

It belongs to the acylphosphatase family.

The catalysed reaction is an acyl phosphate + H2O = a carboxylate + phosphate + H(+). This Bacillus licheniformis (strain ATCC 14580 / DSM 13 / JCM 2505 / CCUG 7422 / NBRC 12200 / NCIMB 9375 / NCTC 10341 / NRRL NRS-1264 / Gibson 46) protein is Acylphosphatase (acyP).